Consider the following 150-residue polypeptide: Large ribosomal subunit protein bL9 (150 aa).

This sequence belongs to the bacterial ribosomal protein bL9 family.

Binds to the 23S rRNA. The polypeptide is Large ribosomal subunit protein bL9 (Burkholderia mallei (strain NCTC 10247)).